The primary structure comprises 147 residues: Large ribosomal subunit protein uL13 (147 aa).

It belongs to the universal ribosomal protein uL13 family. As to quaternary structure, part of the 50S ribosomal subunit.

This protein is one of the early assembly proteins of the 50S ribosomal subunit, although it is not seen to bind rRNA by itself. It is important during the early stages of 50S assembly. This is Large ribosomal subunit protein uL13 from Pseudothermotoga lettingae (strain ATCC BAA-301 / DSM 14385 / NBRC 107922 / TMO) (Thermotoga lettingae).